The primary structure comprises 469 residues: Glutamate--tRNA ligase (469 aa).

The 'HIGH' region motif lies at 11 to 21 (PSPTGFIHLGN). A compositionally biased stretch (basic and acidic residues) spans 118–131 (GEKPRYDGTWRPEP). A disordered region spans residues 118–139 (GEKPRYDGTWRPEPGKVLPEPP). The 'KMSKS' region motif lies at 243-247 (KMSKR). K246 is an ATP binding site.

Belongs to the class-I aminoacyl-tRNA synthetase family. Glutamate--tRNA ligase type 1 subfamily. In terms of assembly, monomer.

The protein resides in the cytoplasm. The enzyme catalyses tRNA(Glu) + L-glutamate + ATP = L-glutamyl-tRNA(Glu) + AMP + diphosphate. In terms of biological role, catalyzes the attachment of glutamate to tRNA(Glu) in a two-step reaction: glutamate is first activated by ATP to form Glu-AMP and then transferred to the acceptor end of tRNA(Glu). In Burkholderia pseudomallei (strain 1106a), this protein is Glutamate--tRNA ligase.